We begin with the raw amino-acid sequence, 319 residues long: Ankyrin repeat domain-containing protein 1 (319 aa).

The stretch at 61-89 (KTEKQREAELKKKKLEQRSKLENLEDLEI) forms a coiled coil. ANK repeat units lie at residues 152–181 (YKRT…QIEF), 185–214 (LEST…KISA), 218–247 (LLST…DLNA), 251–280 (EGDT…DLNV), and 284–315 (AGKT…KASR).

As to quaternary structure, interacts with TTN/titin and YBX1.

The protein localises to the nucleus. May play an important role in endothelial cell activation. May act as a nuclear transcription factor that negatively regulates the expression of cardiac genes. The polypeptide is Ankyrin repeat domain-containing protein 1 (ANKRD1) (Bos taurus (Bovine)).